We begin with the raw amino-acid sequence, 325 residues long: Tetraacyldisaccharide 4'-kinase (325 aa).

58 to 65 (TVGGSGKT) is an ATP binding site.

This sequence belongs to the LpxK family.

The catalysed reaction is a lipid A disaccharide + ATP = a lipid IVA + ADP + H(+). It participates in glycolipid biosynthesis; lipid IV(A) biosynthesis; lipid IV(A) from (3R)-3-hydroxytetradecanoyl-[acyl-carrier-protein] and UDP-N-acetyl-alpha-D-glucosamine: step 6/6. Transfers the gamma-phosphate of ATP to the 4'-position of a tetraacyldisaccharide 1-phosphate intermediate (termed DS-1-P) to form tetraacyldisaccharide 1,4'-bis-phosphate (lipid IVA). The protein is Tetraacyldisaccharide 4'-kinase of Coxiella burnetii (strain CbuK_Q154) (Coxiella burnetii (strain Q154)).